A 122-amino-acid polypeptide reads, in one-letter code: Large ribosomal subunit protein uL14 (122 aa).

Belongs to the universal ribosomal protein uL14 family. As to quaternary structure, part of the 50S ribosomal subunit. Forms a cluster with proteins L3 and L19. In the 70S ribosome, L14 and L19 interact and together make contacts with the 16S rRNA in bridges B5 and B8.

Binds to 23S rRNA. Forms part of two intersubunit bridges in the 70S ribosome. This chain is Large ribosomal subunit protein uL14, found in Streptococcus agalactiae serotype Ia (strain ATCC 27591 / A909 / CDC SS700).